A 648-amino-acid chain; its full sequence is DNA mismatch repair protein MutL (648 aa).

The disordered stretch occupies residues 385 to 430 (STVKGPAVNEPLTENTLNQQKVKTSASTPVVHTGNSVEPKPETSTA). Polar residues predominate over residues 396–430 (LTENTLNQQKVKTSASTPVVHTGNSVEPKPETSTA).

It belongs to the DNA mismatch repair MutL/HexB family.

This protein is involved in the repair of mismatches in DNA. It is required for dam-dependent methyl-directed DNA mismatch repair. May act as a 'molecular matchmaker', a protein that promotes the formation of a stable complex between two or more DNA-binding proteins in an ATP-dependent manner without itself being part of a final effector complex. This chain is DNA mismatch repair protein MutL, found in Agathobacter rectalis (strain ATCC 33656 / DSM 3377 / JCM 17463 / KCTC 5835 / VPI 0990) (Eubacterium rectale).